Reading from the N-terminus, the 399-residue chain is Tryptophan synthase beta chain (399 aa).

K90 carries the post-translational modification N6-(pyridoxal phosphate)lysine.

The protein belongs to the TrpB family. Tetramer of two alpha and two beta chains. Requires pyridoxal 5'-phosphate as cofactor.

It carries out the reaction (1S,2R)-1-C-(indol-3-yl)glycerol 3-phosphate + L-serine = D-glyceraldehyde 3-phosphate + L-tryptophan + H2O. It participates in amino-acid biosynthesis; L-tryptophan biosynthesis; L-tryptophan from chorismate: step 5/5. Its function is as follows. The beta subunit is responsible for the synthesis of L-tryptophan from indole and L-serine. The polypeptide is Tryptophan synthase beta chain (Phocaeicola vulgatus (strain ATCC 8482 / DSM 1447 / JCM 5826 / CCUG 4940 / NBRC 14291 / NCTC 11154) (Bacteroides vulgatus)).